The following is a 238-amino-acid chain: Large ribosomal subunit protein uL1 (238 aa).

It belongs to the universal ribosomal protein uL1 family. Part of the 50S ribosomal subunit.

In terms of biological role, binds directly to 23S rRNA. The L1 stalk is quite mobile in the ribosome, and is involved in E site tRNA release. Its function is as follows. Protein L1 is also a translational repressor protein, it controls the translation of the L11 operon by binding to its mRNA. In Rippkaea orientalis (strain PCC 8801 / RF-1) (Cyanothece sp. (strain PCC 8801)), this protein is Large ribosomal subunit protein uL1.